The following is a 584-amino-acid chain: Pectinesterase 1 (584 aa).

The signal sequence occupies residues 1 to 42 (MTHIKEFFTKLSESSSNQNISNIPKKKKKLFLALFATLLVVA). Residues N108, N129, and N226 are each glycosylated (N-linked (GlcNAc...) asparagine). The substrate site is built by T348 and Q378. Catalysis depends on D401, which acts as the Proton donor. The cysteines at positions 415 and 435 are disulfide-linked. D422 acts as the Nucleophile in catalysis. R490 and W492 together coordinate substrate.

This sequence in the N-terminal section; belongs to the PMEI family. It in the C-terminal section; belongs to the pectinesterase family. Expressed at high levels in flower buds, shoots and young leaves, and at lower levels in young fruit, young bark and juice vesicles. Not expressed at significant levels in leaf abscission zones following ethylene treatment or in mature leaves. In fruit abscission zones, expression was initially undetectable but increased markedly following ethylene treatment.

Its subcellular location is the secreted. The protein localises to the cell wall. The catalysed reaction is [(1-&gt;4)-alpha-D-galacturonosyl methyl ester](n) + n H2O = [(1-&gt;4)-alpha-D-galacturonosyl](n) + n methanol + n H(+). It functions in the pathway glycan metabolism; pectin degradation; 2-dehydro-3-deoxy-D-gluconate from pectin: step 1/5. Functionally, acts in the modification of cell walls via demethylesterification of cell wall pectin. The chain is Pectinesterase 1 (PECS-1.1) from Citrus sinensis (Sweet orange).